The primary structure comprises 71 residues: Small ribosomal subunit protein eS17 (71 aa).

This sequence belongs to the eukaryotic ribosomal protein eS17 family.

This Pyrobaculum neutrophilum (strain DSM 2338 / JCM 9278 / NBRC 100436 / V24Sta) (Thermoproteus neutrophilus) protein is Small ribosomal subunit protein eS17.